The primary structure comprises 464 residues: Fumarate hydratase class II (464 aa).

Substrate-binding positions include 98–100 (SGT), 129–132 (HPND), 139–141 (SSN), and T187. The Proton donor/acceptor role is filled by H188. The active site involves S318. Residues S319 and 324 to 326 (KVN) contribute to the substrate site.

It belongs to the class-II fumarase/aspartase family. Fumarase subfamily. Homotetramer.

It localises to the cytoplasm. The enzyme catalyses (S)-malate = fumarate + H2O. The protein operates within carbohydrate metabolism; tricarboxylic acid cycle; (S)-malate from fumarate: step 1/1. In terms of biological role, involved in the TCA cycle. Catalyzes the stereospecific interconversion of fumarate to L-malate. This chain is Fumarate hydratase class II, found in Haemophilus ducreyi (strain 35000HP / ATCC 700724).